A 64-amino-acid chain; its full sequence is Arasin 1 (64 aa).

The signal sequence occupies residues 1–25; it reads MERRTLLVVLLVCSCVVAAAAEASP. The interval 22-43 is disordered; sequence EASPSRWPSPGRPRPFPGRPKP. The tract at residues 26–48 is pro/Arg-rich region responsible for antibacterial and antifungal activity; the sequence is SRWPSPGRPRPFPGRPKPIFRPR. A compositionally biased stretch (pro residues) spans 31–43; the sequence is PGRPRPFPGRPKP. The tract at residues 49-62 is cystein-containing C-terminal region important for stability but not essential for antimicrobial activity; it reads PCNCYAPPCPCDRW. Intrachain disulfides connect Cys-50/Cys-59 and Cys-52/Cys-57. The propeptide occupies 63–64; sequence RH.

In terms of assembly, interacts with chitin through the N-terminal region (26-48). This interaction may be important, since chitin is a component of the fungal cell wall, as well as of the crab exoskeleton (permitting a possible action of arasin in wound healing in case of lesions). In terms of processing, disulfide bonds are important for activity especially against Gram-negative bacteria, since the linearization of the peptide causes a strong decrease of activity on these bacteria. In terms of tissue distribution, mainly expressed in hemocytes. No or very low expression in heart, gills, inestines, and epidermis.

In terms of biological role, antimicrobial peptide that has a large activity spectrum with activity against Gram-positive, Gram-negative bacteria, as well as against fungi. Shows activity at micromolar concentrations. Displays minimal inhibitory concentration (MIC) values lower than minimal bactericidal concentrations (MBC). Synthetic peptides with similar activities than the full length peptide (composed of the first 23 or 25 amino acids (Arasin 1(26-48) or Arasin 1(26-50))) may have a dual mode of action depending on the peptide concentrations. At MIC concentrations, the peptide penetrates into the cytoplasm of target cells (tested on the Gram-negative E.coli). The two inner membrane proteins YgdD and SbmA may be required for this uptake. At concentrations higher than MIC, arasin may act by disrupting membranes. Full-length and N-terminal peptides do not show hemolytic activity. The polypeptide is Arasin 1 (Hyas araneus (Atlantic lyre crab)).